We begin with the raw amino-acid sequence, 550 residues long: Acetyl-coenzyme A transporter 1 (550 aa).

Basic and acidic residues-rich tracts occupy residues 1 to 12 and 36 to 52; these read MSPTISHKDSSR and DDSRRDSVGGEGDREVL. The segment at 1–58 is disordered; the sequence is MSPTISHKDSSRQRRSGMFSHALDMKSGPLPPGGWDDSRRDSVGGEGDREVLLGDAGP. At 1–74 the chain is on the cytoplasmic side; it reads MSPTISHKDS…PRSYRSELSS (74 aa). S42 is subject to Phosphoserine. A helical transmembrane segment spans residues 75 to 95; that stretch reads ILLLLFLYVLQGIPLGLAGSI. Over 96 to 113 the chain is Extracellular; that stretch reads PLILQSKNVSYTDQAFFS. Residue N103 is glycosylated (N-linked (GlcNAc...) asparagine). Residues 114-134 form a helical membrane-spanning segment; sequence FVFWPFSLKLLWAPLVDAVYF. Over 135-141 the chain is Cytoplasmic; that stretch reads KNFGRRK. The helical transmembrane segment at 142–162 threads the bilayer; it reads SWLVPTQYTLGIFMIYLSTQV. At 163 to 175 the chain is on the extracellular side; the sequence is DRLLGNIDGRTPD. A helical transmembrane segment spans residues 176-196; the sequence is VVALTVTFFLFEFLAATQDIA. Residues 197-217 lie on the Cytoplasmic side of the membrane; that stretch reads VDGWALTMLSRENVGYASTCN. Residues 218–238 form a helical membrane-spanning segment; sequence SVGQTAGYFLGNVLFLALESA. The Extracellular segment spans residues 239–256; that stretch reads DFCNKYLRFQPQPRGIVT. Residues 257-277 traverse the membrane as a helical segment; the sequence is LSDFLFFWGTVFLITTTLVAL. Over 278–300 the chain is Cytoplasmic; it reads LKKENREASIVKEETQGITDTYK. Residues 301–321 traverse the membrane as a helical segment; the sequence is LLFSIIKMPAVLAFCLLILTS. Over 322–344 the chain is Extracellular; sequence KIGFSAADAVTGLKLVEEGVPKE. A helical transmembrane segment spans residues 345-365; the sequence is HLALLAVPMVPLQIILPLLIS. Over 366–375 the chain is Cytoplasmic; the sequence is KYTAGPQPLN. A helical transmembrane segment spans residues 376 to 396; that stretch reads IFYKAMPYRLLLGLEYALLVW. The Extracellular segment spans residues 397–405; the sequence is WTPKVEHQG. Residues 406–426 traverse the membrane as a helical segment; it reads GFPLYYYIIVLLSYALHQVTL. Residues 427–509 are Cytoplasmic-facing; it reads YSMYVSIMAF…LGGSCVTALD (83 aa). Residues 510 to 530 form a helical membrane-spanning segment; it reads GYYVESIICVLIGFGWWFFLG. Topologically, residues 531 to 550 are extracellular; it reads PKFKKLQDEGPSSWKCKRNN.

Belongs to the SLC33A transporter family. As to quaternary structure, homodimerizes. In terms of tissue distribution, expressed in all adult tissues examined including brain, heart, kidney, liver and spleen, with maximum expression in liver and kidney.

It is found in the endoplasmic reticulum membrane. The catalysed reaction is acetyl-CoA(in) = acetyl-CoA(out). Acetyl-CoA transporter that mediates active acetyl-CoA import through the endoplasmic reticulum (ER) membrane into the ER lumen where specific ER-based acetyl-CoA:lysine acetyltransferases are responsible for the acetylation of ER-based protein substrate, such as BACE1. Necessary for O-acetylation of gangliosides. The protein is Acetyl-coenzyme A transporter 1 (Slc33a1) of Mus musculus (Mouse).